The chain runs to 303 residues: Probable cell division protein WhiA (303 aa).

A DNA-binding region (H-T-H motif) is located at residues 272–303; it reads SIQQLADSLSTPLTKSGVNHRLRKINKIADEL.

Belongs to the WhiA family.

Functionally, involved in cell division and chromosome segregation. The protein is Probable cell division protein WhiA of Streptococcus pneumoniae serotype 2 (strain D39 / NCTC 7466).